We begin with the raw amino-acid sequence, 298 residues long: tRNA dimethylallyltransferase (298 aa).

Position 10–17 (10–17) interacts with ATP; sequence GPTASGKT. A substrate-binding site is contributed by 12–17; sequence TASGKT. Positions 35-38 are interaction with substrate tRNA; the sequence is DSMC.

It belongs to the IPP transferase family. As to quaternary structure, monomer. It depends on Mg(2+) as a cofactor.

The enzyme catalyses adenosine(37) in tRNA + dimethylallyl diphosphate = N(6)-dimethylallyladenosine(37) in tRNA + diphosphate. Functionally, catalyzes the transfer of a dimethylallyl group onto the adenine at position 37 in tRNAs that read codons beginning with uridine, leading to the formation of N6-(dimethylallyl)adenosine (i(6)A). The sequence is that of tRNA dimethylallyltransferase from Hydrogenobaculum sp. (strain Y04AAS1).